The sequence spans 101 residues: Stefin-C (101 aa).

N-acetylmethionine is present on Met1. Residues 49 to 53 (QVVAG) carry the Secondary area of contact motif.

Belongs to the cystatin family.

Its subcellular location is the cytoplasm. Strong inhibitor of papain and cathepsin L but poor inhibitor of cathepsin B. This chain is Stefin-C, found in Bos taurus (Bovine).